Consider the following 175-residue polypeptide: Colicin-B immunity protein (175 aa).

3 helical membrane passes run 14–32, 104–121, and 149–168; these read ILYA…ILIL, CFWG…TLFY, and IYFT…LLVI.

Its subcellular location is the cell inner membrane. Functionally, this protein is able to protect a cell, which harbors the plasmid ColB encoding colicin B, against colicin B. This is Colicin-B immunity protein (cbi) from Escherichia coli.